We begin with the raw amino-acid sequence, 267 residues long: Glucosamine-6-phosphate deaminase (267 aa).

The active-site Proton acceptor; for enolization step is the Asp72. The For ring-opening step role is filled by Asp141. The Proton acceptor; for ring-opening step role is filled by His143. Glu148 functions as the For ring-opening step in the catalytic mechanism.

Belongs to the glucosamine/galactosamine-6-phosphate isomerase family. NagB subfamily. Homohexamer.

It carries out the reaction alpha-D-glucosamine 6-phosphate + H2O = beta-D-fructose 6-phosphate + NH4(+). Its pathway is amino-sugar metabolism; N-acetylneuraminate degradation; D-fructose 6-phosphate from N-acetylneuraminate: step 5/5. With respect to regulation, allosterically activated by N-acetylglucosamine 6-phosphate (GlcNAc6P). Its function is as follows. Catalyzes the reversible isomerization-deamination of glucosamine 6-phosphate (GlcN6P) to form fructose 6-phosphate (Fru6P) and ammonium ion. The polypeptide is Glucosamine-6-phosphate deaminase (Actinobacillus pleuropneumoniae serotype 3 (strain JL03)).